The chain runs to 95 residues: UPF0298 protein LVIS_1401 (95 aa).

The protein belongs to the UPF0298 family.

The protein localises to the cytoplasm. The polypeptide is UPF0298 protein LVIS_1401 (Levilactobacillus brevis (strain ATCC 367 / BCRC 12310 / CIP 105137 / JCM 1170 / LMG 11437 / NCIMB 947 / NCTC 947) (Lactobacillus brevis)).